Here is a 565-residue protein sequence, read N- to C-terminus: Potassium-transporting ATPase potassium-binding subunit (565 aa).

Transmembrane regions (helical) follow at residues 6–26 (LMLL…LGSL), 63–83 (LLAI…LLMA), 132–152 (GLGV…FALI), 175–195 (LYVL…QGVI), 250–270 (LSNL…CFAF), 283–303 (LLWT…YAEL), 327–347 (FGIL…CGAV), 354–374 (FTAL…VVFG), 379–399 (GLYG…LMIG), 418–438 (ALAI…ALLC), 483–503 (LLLA…VMAI), and 524–544 (GALF…LTFI).

The protein belongs to the KdpA family. As to quaternary structure, the system is composed of three essential subunits: KdpA, KdpB and KdpC.

It is found in the cell inner membrane. Its function is as follows. Part of the high-affinity ATP-driven potassium transport (or Kdp) system, which catalyzes the hydrolysis of ATP coupled with the electrogenic transport of potassium into the cytoplasm. This subunit binds the periplasmic potassium ions and delivers the ions to the membrane domain of KdpB through an intramembrane tunnel. In Edwardsiella ictaluri (strain 93-146), this protein is Potassium-transporting ATPase potassium-binding subunit.